Here is a 383-residue protein sequence, read N- to C-terminus: Probable mannan endo-1,4-beta-mannosidase A (383 aa).

Positions 1–21 (MKLSNALLTLASLALANVSTA) are cleaved as a signal peptide. N-linked (GlcNAc...) asparagine glycosylation is present at N17. W92 serves as a coordination point for substrate. N194 carries N-linked (GlcNAc...) asparagine glycosylation. Residue N205 participates in substrate binding. Catalysis depends on E206, which acts as the Proton donor. Residue N263 is glycosylated (N-linked (GlcNAc...) asparagine). A substrate-binding site is contributed by Y281. The Nucleophile role is filled by E314. Residue W344 participates in substrate binding.

The protein belongs to the glycosyl hydrolase 5 (cellulase A) family.

It is found in the secreted. It carries out the reaction Random hydrolysis of (1-&gt;4)-beta-D-mannosidic linkages in mannans, galactomannans and glucomannans.. In terms of biological role, endo-1,4-mannanase, a crucial enzyme for depolymerization of seed galactomannans and wood galactoglucomannans. The polypeptide is Probable mannan endo-1,4-beta-mannosidase A (manA) (Aspergillus niger (strain ATCC MYA-4892 / CBS 513.88 / FGSC A1513)).